We begin with the raw amino-acid sequence, 276 residues long: Diaminopimelate epimerase (276 aa).

Substrate-binding residues include asparagine 13, glutamine 46, and asparagine 66. The active-site Proton donor is the cysteine 75. Substrate contacts are provided by residues glycine 76–asparagine 77, asparagine 159, asparagine 192, and glutamate 210–arginine 211. Catalysis depends on cysteine 219, which acts as the Proton acceptor. Glycine 220–serine 221 contacts substrate.

Belongs to the diaminopimelate epimerase family. In terms of assembly, homodimer.

Its subcellular location is the cytoplasm. It carries out the reaction (2S,6S)-2,6-diaminopimelate = meso-2,6-diaminopimelate. It participates in amino-acid biosynthesis; L-lysine biosynthesis via DAP pathway; DL-2,6-diaminopimelate from LL-2,6-diaminopimelate: step 1/1. Catalyzes the stereoinversion of LL-2,6-diaminopimelate (L,L-DAP) to meso-diaminopimelate (meso-DAP), a precursor of L-lysine and an essential component of the bacterial peptidoglycan. This chain is Diaminopimelate epimerase, found in Vibrio campbellii (strain ATCC BAA-1116).